Reading from the N-terminus, the 720-residue chain is Replication restart protein PriA (720 aa).

The Helicase ATP-binding domain occupies 200–366; it reads ILMKNCFTSW…LHKKCFYIKF (167 aa). 213–220 is a binding site for ATP; the sequence is KNNFYLKV. Positions 309 to 312 match the DEAH box motif; the sequence is NQEH. 8 residues coordinate Zn(2+): Cys425, Cys428, Cys434, Cys437, Cys452, Cys455, Cys465, and Cys468.

The protein belongs to the helicase family. PriA subfamily. As to quaternary structure, component of the replication restart primosome. Zn(2+) is required as a cofactor.

The enzyme catalyses Couples ATP hydrolysis with the unwinding of duplex DNA by translocating in the 3'-5' direction.. It carries out the reaction ATP + H2O = ADP + phosphate + H(+). Its function is as follows. Initiates the restart of stalled replication forks, which reloads the replicative helicase on sites other than the origin of replication. Recognizes and binds to abandoned replication forks and remodels them to uncover a helicase loading site. Promotes assembly of the primosome at these replication forks. This chain is Replication restart protein PriA, found in Buchnera aphidicola subsp. Schizaphis graminum (strain Sg).